The following is a 373-amino-acid chain: Erythronate-4-phosphate dehydrogenase (373 aa).

Residues S45 and T67 each contribute to the substrate site. NAD(+) contacts are provided by residues D147, 206–208, and D232; that span reads ASR. The active site involves R208. The active site involves E237. H254 (proton donor) is an active-site residue. NAD(+) is bound at residue G257. Residue Y258 participates in substrate binding.

The protein belongs to the D-isomer specific 2-hydroxyacid dehydrogenase family. PdxB subfamily. In terms of assembly, homodimer.

It is found in the cytoplasm. The catalysed reaction is 4-phospho-D-erythronate + NAD(+) = (R)-3-hydroxy-2-oxo-4-phosphooxybutanoate + NADH + H(+). The protein operates within cofactor biosynthesis; pyridoxine 5'-phosphate biosynthesis; pyridoxine 5'-phosphate from D-erythrose 4-phosphate: step 2/5. Catalyzes the oxidation of erythronate-4-phosphate to 3-hydroxy-2-oxo-4-phosphonooxybutanoate. This Tolumonas auensis (strain DSM 9187 / NBRC 110442 / TA 4) protein is Erythronate-4-phosphate dehydrogenase.